Consider the following 1250-residue polypeptide: Probable autotransporter YfaL (1250 aa).

A signal peptide spans 1-28; it reads MRIIFLRKEYLSLLPSMIASLFSANGVA. The disordered stretch occupies residues 914–951; the sequence is RSQEVTPPSPPDPDPTPDPDPTPDPDPTPDPEPTPAYQ. Residues 919–920 form repeat 1; that stretch reads TP. The interval 919–948 is 15 X 2 AA approximate tandem repeats of [DTPE]-P; it reads TPPSPPDPDPTPDPDPTPDPDPTPDPEPTP. The 2; approximate repeat unit spans residues 921 to 922; that stretch reads PS. The stretch at 923–924 is repeat 3; the sequence is PP. One copy of the 4; approximate repeat lies at 925 to 926; the sequence is DP. 11 consecutive repeat copies span residues 927 to 928, 929 to 930, 931 to 932, 933 to 934, 935 to 936, 937 to 938, 939 to 940, 941 to 942, 943 to 944, 945 to 946, and 947 to 948. The span at 928-942 shows a compositional bias: acidic residues; it reads PTPDPDPTPDPDPTP. An Autotransporter domain is found at 980–1250; it reads AGGDGQTLNL…AGFLSMTVKW (271 aa).

An approximately 170 kDa protein is detected in the outer membrane, while a C-terminal 55 kDa fragment is detected in whole cells. The full-length putative autotransporter may be cleaved to release the mature protein from the outer membrane; Pefabloc SC, a Ser-Thr protease inhibitor prevents the appearance of the 55 kDa C--terminal fragment.

The protein resides in the periplasm. It is found in the secreted. It localises to the cell surface. Its subcellular location is the cell outer membrane. Functionally, probably an autotransporter. Upon overexpression shows increased adherence to polyvinyl chloride (PVC) plates, increased mature biofilm formation. The sequence is that of Probable autotransporter YfaL (yfaL) from Escherichia coli (strain K12).